Consider the following 455-residue polypeptide: MLPSQSPAIFTVSRLNQTVRLLLEHEMGQVWISGEISNFTQPASGHWYFTLKDDTAQVRCAMFRNSNRRVTFRPQHGQQVLVRANITLYEPRGDYQIIVESMQPAGEGLLQQKYEQLKAKLQAEGLFDLQYKNSLPSPAHCVGVITSKTGAALHDILHVLKRRDPSLPVIIYPTAVQGDDAPGQIVRAIELANQRNECDVLIVGRGGGSLEDLWSFNDERVARAIFASRIPVVSAVGHETDVTIADFVADLRAPTPSAAAEVVSRNQQELLRQVQSARQRLEMAMDYYLANRTRRFTQIHHRLQQQHPQLRLARQQTMLERLQKRMSFALENQLKRAGQHQQRLTQRLNQQNPQPKIHRAQTRIQQLEYRLAETLRAQLSATRERFGNAVTHLEAVSPLSTLARGYSVTSAADGAVLKQVKQVKVGETLTTRLGDGVVISEVSAVTKSRKPRKKA.

It belongs to the XseA family. In terms of assembly, heterooligomer composed of large and small subunits.

It localises to the cytoplasm. It carries out the reaction Exonucleolytic cleavage in either 5'- to 3'- or 3'- to 5'-direction to yield nucleoside 5'-phosphates.. Its function is as follows. Bidirectionally degrades single-stranded DNA into large acid-insoluble oligonucleotides, which are then degraded further into small acid-soluble oligonucleotides. This chain is Exodeoxyribonuclease 7 large subunit, found in Escherichia coli (strain SMS-3-5 / SECEC).